Here is a 308-residue protein sequence, read N- to C-terminus: Probable dimethyladenosine transferase (308 aa).

The span at 1–11 (MGKTSKVKKTK) shows a compositional bias: basic residues. The tract at residues 1–24 (MGKTSKVKKTKAGSSTGNVQSLPF) is disordered. Positions 12–24 (AGSSTGNVQSLPF) are enriched in polar residues. H31, L33, G58, E79, D107, and N122 together coordinate S-adenosyl-L-methionine.

The protein belongs to the class I-like SAM-binding methyltransferase superfamily. rRNA adenine N(6)-methyltransferase family. As to quaternary structure, part of the small subunit (SSU) processome, composed of more than 70 proteins and the RNA chaperone small nucleolar RNA (snoRNA) U3.

It is found in the nucleus. The protein resides in the nucleolus. The enzyme catalyses adenosine(1779)/adenosine(1780) in 18S rRNA + 4 S-adenosyl-L-methionine = N(6)-dimethyladenosine(1779)/N(6)-dimethyladenosine(1780) in 18S rRNA + 4 S-adenosyl-L-homocysteine + 4 H(+). Specifically dimethylates two adjacent adenosines in the loop of a conserved hairpin near the 3'-end of 18S rRNA in the 40S particle. Involved in the pre-rRNA processing steps leading to small-subunit rRNA production independently of its RNA-modifying catalytic activity. Part of the small subunit (SSU) processome, first precursor of the small eukaryotic ribosomal subunit. During the assembly of the SSU processome in the nucleolus, many ribosome biogenesis factors, an RNA chaperone and ribosomal proteins associate with the nascent pre-rRNA and work in concert to generate RNA folding, modifications, rearrangements and cleavage as well as targeted degradation of pre-ribosomal RNA by the RNA exosome. This chain is Probable dimethyladenosine transferase, found in Caenorhabditis elegans.